A 477-amino-acid polypeptide reads, in one-letter code: Ribulose bisphosphate carboxylase large chain (477 aa).

A propeptide spanning residues 1 to 2 (MS) is cleaved from the precursor. Position 3 is an N-acetylproline (P3). Substrate contacts are provided by N123 and T173. K175 functions as the Proton acceptor in the catalytic mechanism. K177 is a binding site for substrate. Positions 201, 203, and 204 each coordinate Mg(2+). Residue K201 is modified to N6-carboxylysine. H294 acts as the Proton acceptor in catalysis. Substrate is bound by residues R295, H327, and S379.

It belongs to the RuBisCO large chain family. Type I subfamily. In terms of assembly, heterohexadecamer of 8 large chains and 8 small chains; disulfide-linked. The disulfide link is formed within the large subunit homodimers. Mg(2+) serves as cofactor. Post-translationally, the disulfide bond which can form in the large chain dimeric partners within the hexadecamer appears to be associated with oxidative stress and protein turnover.

It is found in the plastid. The protein localises to the chloroplast. The catalysed reaction is 2 (2R)-3-phosphoglycerate + 2 H(+) = D-ribulose 1,5-bisphosphate + CO2 + H2O. It catalyses the reaction D-ribulose 1,5-bisphosphate + O2 = 2-phosphoglycolate + (2R)-3-phosphoglycerate + 2 H(+). Its function is as follows. RuBisCO catalyzes two reactions: the carboxylation of D-ribulose 1,5-bisphosphate, the primary event in carbon dioxide fixation, as well as the oxidative fragmentation of the pentose substrate in the photorespiration process. Both reactions occur simultaneously and in competition at the same active site. The polypeptide is Ribulose bisphosphate carboxylase large chain (Avena sativa (Oat)).